A 616-amino-acid chain; its full sequence is Dihydroxy-acid dehydratase (616 aa).

Asp-81 lines the Mg(2+) pocket. Cys-122 serves as a coordination point for [2Fe-2S] cluster. Mg(2+) is bound by residues Asp-123 and Lys-124. Lys-124 is subject to N6-carboxylysine. Residue Cys-195 coordinates [2Fe-2S] cluster. Glu-491 contributes to the Mg(2+) binding site. Ser-517 functions as the Proton acceptor in the catalytic mechanism.

This sequence belongs to the IlvD/Edd family. Homodimer. It depends on [2Fe-2S] cluster as a cofactor. Mg(2+) is required as a cofactor.

It carries out the reaction (2R)-2,3-dihydroxy-3-methylbutanoate = 3-methyl-2-oxobutanoate + H2O. The catalysed reaction is (2R,3R)-2,3-dihydroxy-3-methylpentanoate = (S)-3-methyl-2-oxopentanoate + H2O. The protein operates within amino-acid biosynthesis; L-isoleucine biosynthesis; L-isoleucine from 2-oxobutanoate: step 3/4. Its pathway is amino-acid biosynthesis; L-valine biosynthesis; L-valine from pyruvate: step 3/4. Its function is as follows. Functions in the biosynthesis of branched-chain amino acids. Catalyzes the dehydration of (2R,3R)-2,3-dihydroxy-3-methylpentanoate (2,3-dihydroxy-3-methylvalerate) into 2-oxo-3-methylpentanoate (2-oxo-3-methylvalerate) and of (2R)-2,3-dihydroxy-3-methylbutanoate (2,3-dihydroxyisovalerate) into 2-oxo-3-methylbutanoate (2-oxoisovalerate), the penultimate precursor to L-isoleucine and L-valine, respectively. This Shigella flexneri protein is Dihydroxy-acid dehydratase.